The chain runs to 250 residues: Doublesex- and mab-3-related transcription factor dmd-3 (250 aa).

The DM 1 DNA-binding region spans 19-68 (CQRCLNHGLREKRKNHKLSCTFRFCQCSNCIMVERRRQLNSRLMQIDGSR). Polar residues predominate over residues 90 to 100 (CTSQSETTNES). The tract at residues 90 to 115 (CTSQSETTNESSGEDKDDGKPKERRP) is disordered. Over residues 102-115 (GEDKDDGKPKERRP) the composition is skewed to basic and acidic residues. Residues 117 to 164 (CQRCAQHSVVNRLKGHKRACPFRDCFCAKCQVVVERQKLMADQIKLRR) constitute a DNA-binding region (DM 2). A disordered region spans residues 166 to 201 (QKREKNNLNSEREAPIAHSMTPSPIDTVTTTTTPTS). Over residues 169 to 180 (EKNNLNSEREAP) the composition is skewed to basic and acidic residues. The segment covering 186–201 (TPSPIDTVTTTTTPTS) has biased composition (low complexity).

Belongs to the DMRT family. As to expression, in males, expressed in the tail tip. Specifically, expressed in 15 male-specific muscles of the tail tip called the diagonal muscles, and also in core body muscles of both males and hermaphrodites. In males, expressed in ray A-neurons. In males, expressed in PHC sensory neurons. In males, it is also expressed in the hindgut, B lineage and somatic gonad. In hermaphrodites, expressed in the anchor cell only.

It localises to the nucleus. Its subcellular location is the perikaryon. Transcriptional activator which promotes male-specific development. Acts partially redundantly with the transcription factor mab-3 to coordinate tail tip cell fusion and retraction and thereby regulate male tail tip morphogenesis. This is most likely through the regulation of downstream effectors such as eff-1. May also negatively regulate the expression of other proteins implicated in male tail morphogenesis including nhr-25, vav-1 and arl-1 in tail tip cells. In males, plays a role in the development of ray A-neurons by negatively regulating the activity of the transcription factor ast-1. Plays a role in the male-specific differentiation of PHC sensory neurons into densely connected hub sensory neurons. Plays a role in male mating behavior. This Caenorhabditis elegans protein is Doublesex- and mab-3-related transcription factor dmd-3.